A 417-amino-acid chain; its full sequence is UDP-N-acetylglucosamine 1-carboxyvinyltransferase (417 aa).

Position 22 to 23 (22 to 23 (KN)) interacts with phosphoenolpyruvate. Arg-93 serves as a coordination point for UDP-N-acetyl-alpha-D-glucosamine. Residue Cys-117 is the Proton donor of the active site. Cys-117 is modified (2-(S-cysteinyl)pyruvic acid O-phosphothioketal). UDP-N-acetyl-alpha-D-glucosamine is bound by residues 122–126 (RPVDQ), Asp-305, and Ile-327.

Belongs to the EPSP synthase family. MurA subfamily.

It localises to the cytoplasm. The catalysed reaction is phosphoenolpyruvate + UDP-N-acetyl-alpha-D-glucosamine = UDP-N-acetyl-3-O-(1-carboxyvinyl)-alpha-D-glucosamine + phosphate. It participates in cell wall biogenesis; peptidoglycan biosynthesis. Cell wall formation. Adds enolpyruvyl to UDP-N-acetylglucosamine. The chain is UDP-N-acetylglucosamine 1-carboxyvinyltransferase from Nitrosomonas europaea (strain ATCC 19718 / CIP 103999 / KCTC 2705 / NBRC 14298).